The following is a 101-amino-acid chain: Co-chaperonin GroES (101 aa).

The protein belongs to the GroES chaperonin family. As to quaternary structure, heptamer of 7 subunits arranged in a ring. Interacts with the chaperonin GroEL.

It is found in the cytoplasm. Functionally, together with the chaperonin GroEL, plays an essential role in assisting protein folding. The GroEL-GroES system forms a nano-cage that allows encapsulation of the non-native substrate proteins and provides a physical environment optimized to promote and accelerate protein folding. GroES binds to the apical surface of the GroEL ring, thereby capping the opening of the GroEL channel. In Lawsonia intracellularis, this protein is Co-chaperonin GroES.